We begin with the raw amino-acid sequence, 181 residues long: Malignant T-cell-amplified sequence 1-B (181 aa).

The 80-residue stretch at 92–171 (LPHQQVDKGA…IGIENIHYLN (80 aa)) folds into the PUA domain.

It belongs to the MCTS1 family.

The protein localises to the cytoplasm. In terms of biological role, plays a role as translation enhancer and involved in cell cycle regulation. The polypeptide is Malignant T-cell-amplified sequence 1-B (mcts1-b) (Xenopus laevis (African clawed frog)).